A 672-amino-acid chain; its full sequence is DNA ligase (672 aa).

NAD(+) contacts are provided by residues 32 to 36, 81 to 82, and glutamate 113; these read DAEYD and SL. Lysine 115 (N6-AMP-lysine intermediate) is an active-site residue. NAD(+) contacts are provided by arginine 136, glutamate 173, lysine 290, and lysine 314. Cysteine 408, cysteine 411, cysteine 426, and cysteine 432 together coordinate Zn(2+). A BRCT domain is found at 594-672; the sequence is EIDSPFAGKT…EAEMLRLLGE (79 aa).

The protein belongs to the NAD-dependent DNA ligase family. LigA subfamily. Mg(2+) is required as a cofactor. Requires Mn(2+) as cofactor.

The catalysed reaction is NAD(+) + (deoxyribonucleotide)n-3'-hydroxyl + 5'-phospho-(deoxyribonucleotide)m = (deoxyribonucleotide)n+m + AMP + beta-nicotinamide D-nucleotide.. In terms of biological role, DNA ligase that catalyzes the formation of phosphodiester linkages between 5'-phosphoryl and 3'-hydroxyl groups in double-stranded DNA using NAD as a coenzyme and as the energy source for the reaction. It is essential for DNA replication and repair of damaged DNA. This is DNA ligase from Cronobacter sakazakii (strain ATCC BAA-894) (Enterobacter sakazakii).